A 204-amino-acid polypeptide reads, in one-letter code: Methylthioribulose-1-phosphate dehydratase (204 aa).

Histidine 94 and histidine 96 together coordinate Zn(2+).

It belongs to the aldolase class II family. MtnB subfamily. The cofactor is Zn(2+).

The enzyme catalyses 5-(methylsulfanyl)-D-ribulose 1-phosphate = 5-methylsulfanyl-2,3-dioxopentyl phosphate + H2O. It functions in the pathway amino-acid biosynthesis; L-methionine biosynthesis via salvage pathway; L-methionine from S-methyl-5-thio-alpha-D-ribose 1-phosphate: step 2/6. Functionally, catalyzes the dehydration of methylthioribulose-1-phosphate (MTRu-1-P) into 2,3-diketo-5-methylthiopentyl-1-phosphate (DK-MTP-1-P). In Pseudomonas syringae pv. tomato (strain ATCC BAA-871 / DC3000), this protein is Methylthioribulose-1-phosphate dehydratase.